Here is a 543-residue protein sequence, read N- to C-terminus: NADH-ubiquinone oxidoreductase chain 4 (543 aa).

14 helical membrane passes run 5–25 (FLMF…IIWS), 84–104 (VVAF…YILF), 129–149 (VDGI…IALM), 161–181 (SYLI…LVLD), 182–202 (ILLF…LIGL), 213–233 (FYIF…ILTM), 254–274 (IQIF…PTIF), 287–307 (PLGG…YGIF), 321–341 (YTYI…FSTL), 350–370 (IAYS…SNTI), 377–397 (ILLG…VGGV), 416–436 (MAPL…GVPL), 456–476 (LLGL…IFLF), and 501–521 (FYAL…PSII).

Belongs to the complex I subunit 4 family.

The protein resides in the mitochondrion membrane. The catalysed reaction is a ubiquinone + NADH + 5 H(+)(in) = a ubiquinol + NAD(+) + 4 H(+)(out). In terms of biological role, core subunit of the mitochondrial membrane respiratory chain NADH dehydrogenase (Complex I) that is believed to belong to the minimal assembly required for catalysis. Complex I functions in the transfer of electrons from NADH to the respiratory chain. The immediate electron acceptor for the enzyme is believed to be ubiquinone. This Neurospora crassa (strain ATCC 24698 / 74-OR23-1A / CBS 708.71 / DSM 1257 / FGSC 987) protein is NADH-ubiquinone oxidoreductase chain 4 (ndh-4).